We begin with the raw amino-acid sequence, 206 residues long: Holliday junction branch migration complex subunit RuvA (206 aa).

A domain I region spans residues 1-63 (MIASLRGTVI…EDAMKLYGFI (63 aa)). The segment at 64–142 (DNESREMFSV…AFAAGVVDEA (79 aa)) is domain II. The flexible linker stretch occupies residues 143 to 153 (GEQISLPNANI). The segment at 154–206 (ASEVVVEQVSQALVGLGFSEKQSDDAVSFVLAADPSLDTSGALRAALAKLSGK) is domain III.

This sequence belongs to the RuvA family. As to quaternary structure, homotetramer. Forms an RuvA(8)-RuvB(12)-Holliday junction (HJ) complex. HJ DNA is sandwiched between 2 RuvA tetramers; dsDNA enters through RuvA and exits via RuvB. An RuvB hexamer assembles on each DNA strand where it exits the tetramer. Each RuvB hexamer is contacted by two RuvA subunits (via domain III) on 2 adjacent RuvB subunits; this complex drives branch migration. In the full resolvosome a probable DNA-RuvA(4)-RuvB(12)-RuvC(2) complex forms which resolves the HJ.

Its subcellular location is the cytoplasm. Functionally, the RuvA-RuvB-RuvC complex processes Holliday junction (HJ) DNA during genetic recombination and DNA repair, while the RuvA-RuvB complex plays an important role in the rescue of blocked DNA replication forks via replication fork reversal (RFR). RuvA specifically binds to HJ cruciform DNA, conferring on it an open structure. The RuvB hexamer acts as an ATP-dependent pump, pulling dsDNA into and through the RuvAB complex. HJ branch migration allows RuvC to scan DNA until it finds its consensus sequence, where it cleaves and resolves the cruciform DNA. The chain is Holliday junction branch migration complex subunit RuvA from Corynebacterium glutamicum (strain R).